An 827-amino-acid chain; its full sequence is Periplasmic nitrate reductase (827 aa).

The segment at residues 1-33 is a signal peptide (tat-type signal); it reads MNLSRRDFMKANAAMAAATAAGLTIPVKNVVAA. The 4Fe-4S Mo/W bis-MGD-type domain maps to 37–93; the sequence is IKWDKGVCRFCGTGCAVLVGTKDGRVVASQGDPDAEVNRGLNCIKGYFLPKIMYGKD. Residues Cys44, Cys47, Cys51, and Cys79 each coordinate [4Fe-4S] cluster. Mo-bis(molybdopterin guanine dinucleotide) contacts are provided by residues Lys81, Gln148, Asn173, Cys177, 210 to 217, 241 to 245, 260 to 262, Met370, Gln374, Asn480, 506 to 507, Lys529, Asp556, and 716 to 725; these read WGSNMAEM, STYEH, QTD, SD, and TGRVLEHWHT. Phe792 provides a ligand contact to substrate. Mo-bis(molybdopterin guanine dinucleotide) contacts are provided by Asn800 and Lys817.

It belongs to the prokaryotic molybdopterin-containing oxidoreductase family. NasA/NapA/NarB subfamily. Component of the periplasmic nitrate reductase NapAB complex composed of NapA and NapB. [4Fe-4S] cluster serves as cofactor. Mo-bis(molybdopterin guanine dinucleotide) is required as a cofactor. Predicted to be exported by the Tat system. The position of the signal peptide cleavage has not been experimentally proven.

It is found in the periplasm. It carries out the reaction 2 Fe(II)-[cytochrome] + nitrate + 2 H(+) = 2 Fe(III)-[cytochrome] + nitrite + H2O. In terms of biological role, catalytic subunit of the periplasmic nitrate reductase complex NapAB. Receives electrons from NapB and catalyzes the reduction of nitrate to nitrite. The protein is Periplasmic nitrate reductase of Haemophilus influenzae (strain PittEE).